We begin with the raw amino-acid sequence, 187 residues long: GTP cyclohydrolase 1 (187 aa).

Zn(2+)-binding residues include Cys-74, His-77, and Cys-145.

It belongs to the GTP cyclohydrolase I family. As to quaternary structure, homomer.

The enzyme catalyses GTP + H2O = 7,8-dihydroneopterin 3'-triphosphate + formate + H(+). Its pathway is cofactor biosynthesis; 7,8-dihydroneopterin triphosphate biosynthesis; 7,8-dihydroneopterin triphosphate from GTP: step 1/1. In Sulfurihydrogenibium sp. (strain YO3AOP1), this protein is GTP cyclohydrolase 1.